A 387-amino-acid chain; its full sequence is Histone deacetylase 2 (387 aa).

Positions 73–382 (KVSIIYSSSY…IENLSRQGLI (310 aa)) are histone deacetylase. The Proton donor/acceptor role is filled by His201. Residues Asp238, His240, and Asp318 each coordinate Zn(2+).

The protein belongs to the histone deacetylase family. HD type 3 subfamily. Zn(2+) is required as a cofactor.

The protein localises to the nucleus. The catalysed reaction is N(6)-acetyl-L-lysyl-[histone] + H2O = L-lysyl-[histone] + acetate. Responsible for the deacetylation of lysine residues on the N-terminal part of the core histones (H2A, H2B, H3 and H4). Histone deacetylation gives a tag for epigenetic repression and plays an important role in transcriptional regulation, cell cycle progression and developmental events. Histone deacetylases act via the formation of large multiprotein complexes. This Arabidopsis thaliana (Mouse-ear cress) protein is Histone deacetylase 2 (HDA2).